The primary structure comprises 307 residues: Ribonuclease Z (307 aa).

Residues His63, His65, Asp67, His68, His140, Asp211, and His269 each contribute to the Zn(2+) site. The active-site Proton acceptor is the Asp67.

Belongs to the RNase Z family. Homodimer. Requires Zn(2+) as cofactor.

It catalyses the reaction Endonucleolytic cleavage of RNA, removing extra 3' nucleotides from tRNA precursor, generating 3' termini of tRNAs. A 3'-hydroxy group is left at the tRNA terminus and a 5'-phosphoryl group is left at the trailer molecule.. Its function is as follows. Zinc phosphodiesterase, which displays some tRNA 3'-processing endonuclease activity. Probably involved in tRNA maturation, by removing a 3'-trailer from precursor tRNA. The sequence is that of Ribonuclease Z from Bacillus licheniformis (strain ATCC 14580 / DSM 13 / JCM 2505 / CCUG 7422 / NBRC 12200 / NCIMB 9375 / NCTC 10341 / NRRL NRS-1264 / Gibson 46).